The chain runs to 211 residues: Riboflavin kinase (211 aa).

Positions 1-85 (MKKILMLIEL…CDKISNALSK (85 aa)) are H-T-H motif-like. The segment at 86–211 (GVIVGEVVSG…GDRVRLEVIQ (126 aa)) is riboflavin kinase. A CDP-binding site is contributed by 95–100 (GLGEGA). Residues T122 and N124 each contribute to the Mg(2+) site. 2 residues coordinate FMN: T178 and E186. 191-194 (VNLR) lines the CDP pocket.

This sequence belongs to the archaeal riboflavin kinase family. It depends on Mg(2+) as a cofactor.

It carries out the reaction riboflavin + CTP = CDP + FMN + H(+). The protein operates within cofactor biosynthesis; FMN biosynthesis; FMN from riboflavin (CTP route): step 1/1. Functionally, catalyzes the CTP-dependent phosphorylation of riboflavin (vitamin B2) to form flavin mononucleotide (FMN). The polypeptide is Riboflavin kinase (ribK) (Thermococcus kodakarensis (strain ATCC BAA-918 / JCM 12380 / KOD1) (Pyrococcus kodakaraensis (strain KOD1))).